The sequence spans 84 residues: UPF0457 protein BALH_2270 (84 aa).

It belongs to the UPF0457 family.

This is UPF0457 protein BALH_2270 from Bacillus thuringiensis (strain Al Hakam).